Reading from the N-terminus, the 194-residue chain is MSLVPVVVEQTNRGERSYDIYSRLLKDRIIMLSEEVNDTTASLIVAQLLFLEAEDPDKDIHLYINSPGGSITSGMAIYDTMQYIKPDVSTICVGMAASMGAFLLAAGAKGKRYALPNSEVMIHQPLGGFRGQATDIGIHAERILKMKKKLNTILSDRTGKPLEQVELDTERDHFLSAEEAKEYGLIDEVIDKKK.

S98 functions as the Nucleophile in the catalytic mechanism. H123 is an active-site residue.

Belongs to the peptidase S14 family. As to quaternary structure, fourteen ClpP subunits assemble into 2 heptameric rings which stack back to back to give a disk-like structure with a central cavity, resembling the structure of eukaryotic proteasomes.

It is found in the cytoplasm. The enzyme catalyses Hydrolysis of proteins to small peptides in the presence of ATP and magnesium. alpha-casein is the usual test substrate. In the absence of ATP, only oligopeptides shorter than five residues are hydrolyzed (such as succinyl-Leu-Tyr-|-NHMec, and Leu-Tyr-Leu-|-Tyr-Trp, in which cleavage of the -Tyr-|-Leu- and -Tyr-|-Trp bonds also occurs).. Cleaves peptides in various proteins in a process that requires ATP hydrolysis. Has a chymotrypsin-like activity. Plays a major role in the degradation of misfolded proteins. This chain is ATP-dependent Clp protease proteolytic subunit, found in Clostridium botulinum (strain Hall / ATCC 3502 / NCTC 13319 / Type A).